A 133-amino-acid chain; its full sequence is Interleukin-4 (133 aa).

The signal sequence occupies residues 1 to 24 (MGLTSQLIPMLVCLLACTSNFVHG). Disulfide bonds link C27–C133, C48–C85, and C70–C105. N62, N96, and N102 each carry an N-linked (GlcNAc...) asparagine glycan.

The protein belongs to the IL-4/IL-13 family.

It is found in the secreted. Its function is as follows. Participates in at least several B-cell activation processes as well as of other cell types. It is a costimulator of DNA-synthesis. It induces the expression of class II MHC molecules on resting B-cells. It enhances both secretion and cell surface expression of IgE and IgG1. It also regulates the expression of the low affinity Fc receptor for IgE (CD23) on both lymphocytes and monocytes. Positively regulates IL31RA expression in macrophages. Stimulates autophagy in dendritic cells by interfering with mTORC1 signaling and through the induction of RUFY4. The chain is Interleukin-4 (IL4) from Tursiops truncatus (Atlantic bottle-nosed dolphin).